Here is an 84-residue protein sequence, read N- to C-terminus: MKTLLLTLVVVTIVCLDLGNSLKCYSSRTETMTCPEGEDKCEKYAVGLMHGSFFFIYTCTSKCHEGAYNVCCSTDLCNKSSTSG.

The signal sequence occupies residues 1 to 21; sequence MKTLLLTLVVVTIVCLDLGNS. Disulfide bonds link Cys-24–Cys-41, Cys-34–Cys-59, Cys-63–Cys-71, and Cys-72–Cys-77. Residue His-50 participates in Zn(2+) binding.

This sequence belongs to the three-finger toxin family. Short-chain subfamily. As to quaternary structure, homodimer; non-covalently linked. Is able to form a tetramer of dimers in the presence of 2 zinc ions. In terms of tissue distribution, expressed by the venom gland.

It localises to the secreted. In terms of biological role, postsynaptic neurotoxin that produces potent, and completely reversible, postsynaptic neuromuscular blockade, as well as broad spectrum inhibition of human muscle and neuronal nicotinic acetylcholine receptors (nAChRs). Inhibition is potent or moderate, depending on the receptor (alpha-1-beta-1-delta-epsilon/CHRNA1-CHRNB1-CHRND-CHRNE (IC(50)=2.56 uM), alpha-4-beta-2/CHRNA4-CHRNB2 (IC(50)=1.8 uM), alpha-7/CHRNA7 (IC(50)=7 uM), and alpha-3-beta-2/CHRNA3-CHRNB2 (IC(50)=12.6 uM)). Acts as a competitive antagonist of ACh. Binds to chicken muscle-type nicotinic acetylcholine receptor (AChR) with high potency compared with the cloned human receptor. Unlike short-chain alpha-3FTxs that only bind to muscle nAChRs, this toxin utilizes dimerization to expand its pharmacological targets to block neuronal nAChRs. The sequence is that of Fulditoxin from Micrurus fulvius (Eastern coral snake).